Consider the following 432-residue polypeptide: Adenylosuccinate synthetase (432 aa).

GTP-binding positions include 13-19 (GDEGKGK) and 41-43 (GHT). The active-site Proton acceptor is Asp14. Mg(2+)-binding residues include Asp14 and Gly41. Residues 14 to 17 (DEGK), 39 to 42 (NAGH), Thr130, Arg144, Gln225, Thr240, and Arg304 each bind IMP. His42 (proton donor) is an active-site residue. 300–306 (ATTGRRR) is a binding site for substrate. GTP is bound by residues Arg306, 332 to 334 (KLD), and 415 to 417 (STG).

It belongs to the adenylosuccinate synthetase family. In terms of assembly, homodimer. It depends on Mg(2+) as a cofactor.

It localises to the cytoplasm. It carries out the reaction IMP + L-aspartate + GTP = N(6)-(1,2-dicarboxyethyl)-AMP + GDP + phosphate + 2 H(+). It functions in the pathway purine metabolism; AMP biosynthesis via de novo pathway; AMP from IMP: step 1/2. Plays an important role in the de novo pathway of purine nucleotide biosynthesis. Catalyzes the first committed step in the biosynthesis of AMP from IMP. The sequence is that of Adenylosuccinate synthetase from Cronobacter sakazakii (strain ATCC BAA-894) (Enterobacter sakazakii).